A 565-amino-acid polypeptide reads, in one-letter code: MDYKKLVAERIKEHVDLELENIEKLIEIPPKPEMGDFAFPCFQLAKVMRKAPNMIAAELAEKINKEGFERVECLGPYLNFFVDKVAFSKNIISKVLEEGDKYGSSKIGEGKNVVVEYSSPNIAKPFHVGHLFTTAIGHSLYRMLNFEGYNPIRINHLGDWGTQFGKLISAYKRWGNEEALEEAPINELLRIYVKFHDEAENNPELEDEGRMYFKKLEDGDQEAVALWERFKDLSLKEFNKIYDMLGVDFDSWAGESFYNDKMDKVVEELEKANILTESNGAKVVMLDEYNMPPCIVVKSDGASIYATRDLAAASYRHKTYNFDKCIYVVGKDQILHFNQVFKTLELAGNEWAKNCVHIPFGLVKFADRKLSTRKGNVVLLEDLLNEAIDKTRETIEEKNPQLENKEEVAKKIGIGAILFTYLKNSRERDIVFDWKEMLSFDGETGPYVQYSYARAKSILRKAEEQKITAEPDFTKLTSKEEFELAKTLEGLQKAVILGIDKLEPSVVTRYSIEVAKAFNKFYNNHTVLNVEDEGLKAARLELIKATAQVIKNALFLIGIDVVEKM.

Residues 120-130 (PNIAKPFHVGH) carry the 'HIGH' region motif.

The protein belongs to the class-I aminoacyl-tRNA synthetase family. Monomer.

It localises to the cytoplasm. It carries out the reaction tRNA(Arg) + L-arginine + ATP = L-arginyl-tRNA(Arg) + AMP + diphosphate. This chain is Arginine--tRNA ligase, found in Clostridium perfringens (strain 13 / Type A).